Consider the following 368-residue polypeptide: Histidinol-phosphate aminotransferase (368 aa).

The residue at position 215 (K215) is an N6-(pyridoxal phosphate)lysine.

It belongs to the class-II pyridoxal-phosphate-dependent aminotransferase family. Histidinol-phosphate aminotransferase subfamily. Homodimer. It depends on pyridoxal 5'-phosphate as a cofactor.

The catalysed reaction is L-histidinol phosphate + 2-oxoglutarate = 3-(imidazol-4-yl)-2-oxopropyl phosphate + L-glutamate. The protein operates within amino-acid biosynthesis; L-histidine biosynthesis; L-histidine from 5-phospho-alpha-D-ribose 1-diphosphate: step 7/9. This is Histidinol-phosphate aminotransferase from Buchnera aphidicola subsp. Acyrthosiphon pisum (strain 5A).